A 234-amino-acid chain; its full sequence is Geranylgeranylglyceryl phosphate synthase (234 aa).

Aspartate 24 and serine 52 together coordinate Mg(2+). Sn-glycerol 1-phosphate contacts are provided by residues 172-178 (YLEAGSG), 203-204 (GG), and 225-226 (GT).

It belongs to the GGGP/HepGP synthase family. Group II subfamily. In terms of assembly, homodimer. It depends on Mg(2+) as a cofactor.

The enzyme catalyses sn-glycerol 1-phosphate + (2E,6E,10E)-geranylgeranyl diphosphate = sn-3-O-(geranylgeranyl)glycerol 1-phosphate + diphosphate. Functionally, prenyltransferase that catalyzes the transfer of the geranylgeranyl moiety of geranylgeranyl diphosphate (GGPP) to the C3 hydroxyl of sn-glycerol-1-phosphate (G1P). The sequence is that of Geranylgeranylglyceryl phosphate synthase from Zunongwangia profunda (strain DSM 18752 / CCTCC AB 206139 / SM-A87) (Wangia profunda).